A 78-amino-acid polypeptide reads, in one-letter code: RNA-binding protein Hfq (78 aa).

The Sm domain maps to 10-69 (DPFLNTLRKEHVPVSIYLVNGIKLQGQIESFDQYVVLLRNTVTQMVYKHAISTVVPARAV).

Belongs to the Hfq family. In terms of assembly, homohexamer.

Its function is as follows. RNA chaperone that binds small regulatory RNA (sRNAs) and mRNAs to facilitate mRNA translational regulation in response to envelope stress, environmental stress and changes in metabolite concentrations. Also binds with high specificity to tRNAs. The protein is RNA-binding protein Hfq of Bordetella avium (strain 197N).